Here is a 235-residue protein sequence, read N- to C-terminus: Ion-translocating oxidoreductase complex subunit E (235 aa).

Helical transmembrane passes span 63–83 (LGLG…ISLF), 93–113 (IPIY…LMNA), 117–137 (TLYQ…IIIG), 152–172 (IWDG…LGAL), and 206–226 (SFLL…LLAI).

Belongs to the NqrDE/RnfAE family. As to quaternary structure, the complex is composed of six subunits: RnfA, RnfB, RnfC, RnfD, RnfE and RnfG.

Its subcellular location is the cell inner membrane. Its function is as follows. Part of a membrane-bound complex that couples electron transfer with translocation of ions across the membrane. The chain is Ion-translocating oxidoreductase complex subunit E from Haemophilus influenzae (strain 86-028NP).